A 361-amino-acid polypeptide reads, in one-letter code: MTTMYVSRVSTRPLSAQSAAQLSKAVAFFAQSYRLSSNACTAPTPSRRAFTSASKIQVKGRDLFPEPEHGQIKRTEPAWPHPPYTAEQMRSKVYFAHRKPRDFSDRVALGMVRFLRWCTDFATGYKHNVEAPKKASDSNALTATKPYQMSERKWLIRYVFLESVAGVPGMVAGMLRHLRSLRGLKRDNGWIETLLEEAYNERMHLLTFLKMYEPGIFMRTMILGAQGVFFNSFFLCYLFSPRTCHRFVGYLEEEAVLTYTLSIQDLENGHLPKWADPDFKAPDLAVEYWGMPEGNRSMRDLLYYIRADEAKHREVNHTLGNLKQDEDPNPFVSEYGKERGEKPGKGIESLKPVGWERDEVI.

A helical transmembrane segment spans residues 155-175 (LIRYVFLESVAGVPGMVAGML). 3 residues coordinate Fe cation: Glu162, Glu201, and His204. Residues 221–241 (MILGAQGVFFNSFFLCYLFSP) traverse the membrane as a helical segment. Residues Glu252, Glu253, Glu309, and His312 each contribute to the Fe cation site. The tract at residues 320–361 (GNLKQDEDPNPFVSEYGKERGEKPGKGIESLKPVGWERDEVI) is disordered. The span at 335–345 (YGKERGEKPGK) shows a compositional bias: basic and acidic residues.

Belongs to the alternative oxidase family. The cofactor is Fe cation.

Its subcellular location is the mitochondrion inner membrane. Functionally, catalyzes cyanide-resistant oxygen consumption. May increase respiration when the cytochrome respiratory pathway is restricted, or in response to low temperatures. This chain is Alternative oxidase, mitochondrial (aox), found in Botryotinia fuckeliana (Noble rot fungus).